The primary structure comprises 182 residues: uncharacterized protein (182 aa).

Disordered regions lie at residues 1–49 (MAAP…DGGS) and 126–171 (QGGH…VHAQ). Residues 17–39 (ELLEKAARLERGPPPRGDPEAVG) show a composition bias toward basic and acidic residues.

This is an uncharacterized protein from Homo sapiens (Human).